The chain runs to 228 residues: Ribonuclease 3 (228 aa).

Residues 5–134 (RSKLEKDYGI…FLGALLLDKG (130 aa)) enclose the RNase III domain. Glu47 serves as a coordination point for Mg(2+). The active site involves Asp51. Asp120 and Glu123 together coordinate Mg(2+). Glu123 is a catalytic residue. One can recognise a DRBM domain in the interval 160-228 (DYKTSLQELL…AAKNALATLQ (69 aa)).

The protein belongs to the ribonuclease III family. As to quaternary structure, homodimer. Requires Mg(2+) as cofactor.

The protein localises to the cytoplasm. The catalysed reaction is Endonucleolytic cleavage to 5'-phosphomonoester.. Its function is as follows. Digests double-stranded RNA. Involved in the processing of primary rRNA transcript to yield the immediate precursors to the large and small rRNAs (23S and 16S). Processes some mRNAs, and tRNAs when they are encoded in the rRNA operon. Processes pre-crRNA and tracrRNA of type II CRISPR loci if present in the organism. This chain is Ribonuclease 3, found in Streptococcus agalactiae serotype III (strain NEM316).